A 492-amino-acid chain; its full sequence is NADH-quinone oxidoreductase subunit N 2 (492 aa).

The next 14 membrane-spanning stretches (helical) occupy residues 16 to 36 (ILPE…DALI), 44 to 64 (PLGY…ACQA), 87 to 107 (FSLF…LVSF), 118 to 138 (GEYY…TSAT), 140 to 160 (LVLI…LAAM), 175 to 195 (FLLG…IFGA), 216 to 236 (PIIY…VAAA), 250 to 270 (PSPI…AVLL), 282 to 302 (FWIV…GALV), 309 to 329 (LLAY…AAAK), 333 to 353 (ISAA…AFAV), 381 to 401 (AAIL…GGFF), 416 to 438 (VWLT…RIIV), and 455 to 475 (PFGL…LGVL).

It belongs to the complex I subunit 2 family. In terms of assembly, NDH-1 is composed of 14 different subunits. Subunits NuoA, H, J, K, L, M, N constitute the membrane sector of the complex.

Its subcellular location is the cell inner membrane. It catalyses the reaction a quinone + NADH + 5 H(+)(in) = a quinol + NAD(+) + 4 H(+)(out). Its function is as follows. NDH-1 shuttles electrons from NADH, via FMN and iron-sulfur (Fe-S) centers, to quinones in the respiratory chain. The immediate electron acceptor for the enzyme in this species is believed to be ubiquinone. Couples the redox reaction to proton translocation (for every two electrons transferred, four hydrogen ions are translocated across the cytoplasmic membrane), and thus conserves the redox energy in a proton gradient. The polypeptide is NADH-quinone oxidoreductase subunit N 2 (Koribacter versatilis (strain Ellin345)).